A 647-amino-acid chain; its full sequence is DNA ligase (647 aa).

NAD(+) is bound by residues 30 to 34, 79 to 80, and glutamate 105; these read DEEYD and SM. Lysine 107 serves as the catalytic N6-AMP-lysine intermediate. Arginine 128, glutamate 162, and lysine 301 together coordinate NAD(+). The Zn(2+) site is built by cysteine 395, cysteine 398, cysteine 411, and cysteine 416. Residues 570-647 enclose the BRCT domain; it reads KSDGVIFGKT…ESAFNELVKE (78 aa).

This sequence belongs to the NAD-dependent DNA ligase family. LigA subfamily. The cofactor is Mg(2+). Mn(2+) is required as a cofactor.

The catalysed reaction is NAD(+) + (deoxyribonucleotide)n-3'-hydroxyl + 5'-phospho-(deoxyribonucleotide)m = (deoxyribonucleotide)n+m + AMP + beta-nicotinamide D-nucleotide.. Its function is as follows. DNA ligase that catalyzes the formation of phosphodiester linkages between 5'-phosphoryl and 3'-hydroxyl groups in double-stranded DNA using NAD as a coenzyme and as the energy source for the reaction. It is essential for DNA replication and repair of damaged DNA. This chain is DNA ligase, found in Campylobacter jejuni (strain RM1221).